The following is a 444-amino-acid chain: MTSKTLYQKIYDSHVVYEDKNGESILYIDLHLLHEVTSPQAFDALRSKKRKVRQSKKTFATMDHNVSTKIQSISASGSMAKKQMEQLIKNCRDFNIPLYDINNPNQGIVHVIAPEKGMTLPGMTIVCGDSHTSTHGAFGALAFGIGTSEVEHVLATQTLKQKRFKNMKVEIIGKIPKFVTAKDIILFIIGQLGSSSGTGYVIEFCGDVIKNISMEERMTICNMAIEMGAKSGLIAPDEITYKYLKDKIYSPSGLFWEKSLDYWKFLKSDKNAHFDKCITLDISNLAPQITWGTNPDQVISIDEKIPDYNNINSLLKKESAKSACEYMGLKSNTYLTNISIDRVFIGSCTNARIEDLRAASKILKNRKIAKHVKAIVVPGSGSVKRKAEQEGLDKIFIDSGFEWRLPGCSMCLGMNKDRLNFGERCASTSNRNFEGRQGRGGRTH.

Residues C348, C408, and C411 each coordinate [4Fe-4S] cluster.

This sequence belongs to the aconitase/IPM isomerase family. LeuC type 1 subfamily. In terms of assembly, heterodimer of LeuC and LeuD. The cofactor is [4Fe-4S] cluster.

The catalysed reaction is (2R,3S)-3-isopropylmalate = (2S)-2-isopropylmalate. It participates in amino-acid biosynthesis; L-leucine biosynthesis; L-leucine from 3-methyl-2-oxobutanoate: step 2/4. Its function is as follows. Catalyzes the isomerization between 2-isopropylmalate and 3-isopropylmalate, via the formation of 2-isopropylmaleate. The sequence is that of 3-isopropylmalate dehydratase large subunit from Buchnera aphidicola subsp. Uroleucon ambrosiae.